The sequence spans 417 residues: GTP-binding protein YPT11 (417 aa).

The disordered stretch occupies residues 1–34; sequence MSQRKRYSLNVVTSPSIPSPTPSAPIRTNESNWE. GTP-binding positions include 97–104, 228–232, and 292–295; these read GDANVGKT, DTAGQ, and NKID. 2 S-geranylgeranyl cysteine lipidation sites follow: Cys-415 and Cys-416.

The protein belongs to the small GTPase superfamily. Rab family. As to quaternary structure, interacts with MYO2 (via C-terminal tail domain). Interacts with YIF1, YIP3, YIP4 and YIP5.

It is found in the endoplasmic reticulum membrane. Its subcellular location is the bud tip. The protein resides in the bud neck. Involved in the positive control of both endoplasmic reticulum (ER) and mitochondrion inheritance during cell divison. Required for the MYO2-dependent retention of newly inherited mitochondria at the bud tip in developing daughter cells. The chain is GTP-binding protein YPT11 (YPT11) from Saccharomyces cerevisiae (strain AWRI1631) (Baker's yeast).